Reading from the N-terminus, the 520-residue chain is Fusaridione A cluster transcription factor fsdR (520 aa).

The segment at 1–30 (MSTGPPSGISLVSMTTPRKSGQHTPESWSK) is disordered.

It localises to the nucleus. Transcription factor that regulates the expression of the gene cluster that mediates the biosynthesis of fusaridione A. The polypeptide is Fusaridione A cluster transcription factor fsdR (Fusarium heterosporum).